The chain runs to 346 residues: Holliday junction branch migration complex subunit RuvB (346 aa).

Residues 1–182 are large ATPase domain (RuvB-L); the sequence is MSEAARLIAP…FGIPVRLNFY (182 aa). ATP is bound by residues arginine 22, glycine 63, lysine 66, threonine 67, threonine 68, 129–131, arginine 172, tyrosine 182, and arginine 219; that span reads EDF. Position 67 (threonine 67) interacts with Mg(2+). The interval 183-253 is small ATPAse domain (RuvB-S); that stretch reads TVEELELIVR…IADEALTRLL (71 aa). A head domain (RuvB-H) region spans residues 256–346; the sequence is SMGLDQLDRR…SQFRLTLEDD (91 aa). DNA-binding residues include arginine 292, arginine 311, and arginine 316.

Belongs to the RuvB family. In terms of assembly, homohexamer. Forms an RuvA(8)-RuvB(12)-Holliday junction (HJ) complex. HJ DNA is sandwiched between 2 RuvA tetramers; dsDNA enters through RuvA and exits via RuvB. An RuvB hexamer assembles on each DNA strand where it exits the tetramer. Each RuvB hexamer is contacted by two RuvA subunits (via domain III) on 2 adjacent RuvB subunits; this complex drives branch migration. In the full resolvosome a probable DNA-RuvA(4)-RuvB(12)-RuvC(2) complex forms which resolves the HJ.

The protein resides in the cytoplasm. It catalyses the reaction ATP + H2O = ADP + phosphate + H(+). In terms of biological role, the RuvA-RuvB-RuvC complex processes Holliday junction (HJ) DNA during genetic recombination and DNA repair, while the RuvA-RuvB complex plays an important role in the rescue of blocked DNA replication forks via replication fork reversal (RFR). RuvA specifically binds to HJ cruciform DNA, conferring on it an open structure. The RuvB hexamer acts as an ATP-dependent pump, pulling dsDNA into and through the RuvAB complex. RuvB forms 2 homohexamers on either side of HJ DNA bound by 1 or 2 RuvA tetramers; 4 subunits per hexamer contact DNA at a time. Coordinated motions by a converter formed by DNA-disengaged RuvB subunits stimulates ATP hydrolysis and nucleotide exchange. Immobilization of the converter enables RuvB to convert the ATP-contained energy into a lever motion, pulling 2 nucleotides of DNA out of the RuvA tetramer per ATP hydrolyzed, thus driving DNA branch migration. The RuvB motors rotate together with the DNA substrate, which together with the progressing nucleotide cycle form the mechanistic basis for DNA recombination by continuous HJ branch migration. Branch migration allows RuvC to scan DNA until it finds its consensus sequence, where it cleaves and resolves cruciform DNA. This Rhizobium meliloti (strain 1021) (Ensifer meliloti) protein is Holliday junction branch migration complex subunit RuvB.